The primary structure comprises 299 residues: GTPase Era (299 aa).

The Era-type G domain occupies 5–172 (KSGFVSIIGR…IDVLKSFLPE (168 aa)). The segment at 13 to 20 (GRPNVGKS) is G1. 13–20 (GRPNVGKS) contacts GTP. A G2 region spans residues 39-43 (QTTRN). The interval 60–63 (DTPG) is G3. GTP contacts are provided by residues 60–64 (DTPGI) and 122–125 (NKID). The tract at residues 122–125 (NKID) is G4. A G5 region spans residues 151-153 (ISA). A KH type-2 domain is found at 203–280 (TSEEIPHAIG…YLELWVKVQR (78 aa)).

It belongs to the TRAFAC class TrmE-Era-EngA-EngB-Septin-like GTPase superfamily. Era GTPase family. Monomer.

The protein resides in the cytoplasm. The protein localises to the cell membrane. Its function is as follows. An essential GTPase that binds both GDP and GTP, with rapid nucleotide exchange. Plays a role in 16S rRNA processing and 30S ribosomal subunit biogenesis and possibly also in cell cycle regulation and energy metabolism. The protein is GTPase Era of Staphylococcus epidermidis (strain ATCC 12228 / FDA PCI 1200).